A 282-amino-acid polypeptide reads, in one-letter code: Putative 4-diphosphocytidyl-2-C-methyl-D-erythritol kinase (282 aa).

Residue K9 is part of the active site. Position 93–103 (P93–A103) interacts with ATP. Residue D135 is part of the active site.

This sequence belongs to the GHMP kinase family. IspE subfamily.

The catalysed reaction is 4-CDP-2-C-methyl-D-erythritol + ATP = 4-CDP-2-C-methyl-D-erythritol 2-phosphate + ADP + H(+). In terms of biological role, catalyzes the phosphorylation of the position 2 hydroxy group of 4-diphosphocytidyl-2C-methyl-D-erythritol. The sequence is that of Putative 4-diphosphocytidyl-2-C-methyl-D-erythritol kinase (ispE) from Staphylococcus epidermidis (strain ATCC 35984 / DSM 28319 / BCRC 17069 / CCUG 31568 / BM 3577 / RP62A).